We begin with the raw amino-acid sequence, 162 residues long: Transcriptional repressor NrdR (162 aa).

The segment at 3-34 is a zinc-finger region; the sequence is CPYCHHTDSRVLESRSAEGGQSIRRRRECLAC. Positions 49-139 constitute an ATP-cone domain; that stretch reads ITVIKRNGDR…VYRQFQGISD (91 aa).

Belongs to the NrdR family. Zn(2+) serves as cofactor.

Its function is as follows. Negatively regulates transcription of bacterial ribonucleotide reductase nrd genes and operons by binding to NrdR-boxes. The sequence is that of Transcriptional repressor NrdR from Thermosynechococcus vestitus (strain NIES-2133 / IAM M-273 / BP-1).